The following is a 376-amino-acid chain: Multicilin (376 aa).

A coiled-coil region spans residues 165-213; the sequence is EQYWRDVADHNQKALGDALVENNQLQVSLTEKQEEIASLKEKNIQLNEL. A disordered region spans residues 230–261; that stretch reads ERPKHSSGATQGRLPVKRSLEDFYPQSNEPDS. The segment at 331-376 is TIRT domain; it reads TELEEDVSFRTSIKEHSTIRTLAFPQGNAFTIRTAAGGYKFRWVPN.

The protein belongs to the geminin family. Component of the EDM complex, at least composed of e2f4, e2f5, mcidas and tfdp1.

The protein localises to the nucleus. In terms of biological role, transcription regulator specifically required for multiciliate cell differentiation. Acts in a multiprotein complex containing e2f4 and e2f5 that binds and activate genes required for centriole biogenesis. Activates genes required for centriole assembly (plk4, cep152) and genes specifically required for motile cilia formation (foxj1). Also promotes the deuterosome pathway of centriole biogenesis by activating expression of deup1, but not its paralog cep63. This is Multicilin (mcidas) from Xenopus tropicalis (Western clawed frog).